The sequence spans 653 residues: DNA-directed RNA polymerase III subunit RPC-3 (653 aa).

Disordered regions lie at residues 141–186, 280–309, and 422–442; these read INGV…DSDP, DSSA…DFSD, and IKED…KRRG. A compositionally biased stretch (basic and acidic residues) spans 159 to 170; that stretch reads AENHTDHAHDYQ. Acidic residues-rich tracts occupy residues 293 to 309 and 424 to 433; these read PLED…DFSD and EDEDDEDEEG. A leucine-zipper region spans residues 580-601; sequence TYKSMSRCLQRIRVEREKLKFL.

This sequence belongs to the RNA polymerase beta chain family. As to quaternary structure, component of the RNA polymerase III (Pol III) complex consisting of 17 subunits.

It is found in the nucleus. Functionally, DNA-dependent RNA polymerase catalyzes the transcription of DNA into RNA using the four ribonucleoside triphosphates as substrates. Specific core component of RNA polymerase III which synthesizes small RNAs, such as 5S rRNA and tRNAs. This chain is DNA-directed RNA polymerase III subunit RPC-3 (RPC-82), found in Coccidioides immitis (strain RS) (Valley fever fungus).